The chain runs to 67 residues: Sec-independent protein translocase protein TatA (67 aa).

The helical transmembrane segment at 1–21 threads the bilayer; that stretch reads MFGLGGQELVLILLIVLLLFG.

It belongs to the TatA/E family. Forms a complex with TatC.

It localises to the cell inner membrane. In terms of biological role, part of the twin-arginine translocation (Tat) system that transports large folded proteins containing a characteristic twin-arginine motif in their signal peptide across membranes. TatA could form the protein-conducting channel of the Tat system. In Chlorobaculum tepidum (strain ATCC 49652 / DSM 12025 / NBRC 103806 / TLS) (Chlorobium tepidum), this protein is Sec-independent protein translocase protein TatA.